The primary structure comprises 104 residues: MRDPLFKGCTRPAMLMGVPATPLAVCSGTIALLGIWFSIAFLALFPVALLAMRIMIRRDDQQFRLIWLYLRMRWLSRDRTHAFWQSTVYAPLRYAERRQRLRKP.

A helical transmembrane segment spans residues 30–50 (IALLGIWFSIAFLALFPVALL).

The protein belongs to the virB3 family.

It localises to the cell membrane. The chain is Type IV secretion system protein PtlB homolog (ptlB) from Bordetella bronchiseptica (strain ATCC BAA-588 / NCTC 13252 / RB50) (Alcaligenes bronchisepticus).